Consider the following 345-residue polypeptide: S-adenosylmethionine:tRNA ribosyltransferase-isomerase (345 aa).

The protein belongs to the QueA family. In terms of assembly, monomer.

It localises to the cytoplasm. The catalysed reaction is 7-aminomethyl-7-carbaguanosine(34) in tRNA + S-adenosyl-L-methionine = epoxyqueuosine(34) in tRNA + adenine + L-methionine + 2 H(+). It participates in tRNA modification; tRNA-queuosine biosynthesis. Functionally, transfers and isomerizes the ribose moiety from AdoMet to the 7-aminomethyl group of 7-deazaguanine (preQ1-tRNA) to give epoxyqueuosine (oQ-tRNA). The sequence is that of S-adenosylmethionine:tRNA ribosyltransferase-isomerase from Rhodospirillum rubrum (strain ATCC 11170 / ATH 1.1.1 / DSM 467 / LMG 4362 / NCIMB 8255 / S1).